We begin with the raw amino-acid sequence, 253 residues long: 5-oxoprolinase subunit A (253 aa).

The protein belongs to the LamB/PxpA family. As to quaternary structure, forms a complex composed of PxpA, PxpB and PxpC.

The enzyme catalyses 5-oxo-L-proline + ATP + 2 H2O = L-glutamate + ADP + phosphate + H(+). In terms of biological role, catalyzes the cleavage of 5-oxoproline to form L-glutamate coupled to the hydrolysis of ATP to ADP and inorganic phosphate. The sequence is that of 5-oxoprolinase subunit A from Syntrophobacter fumaroxidans (strain DSM 10017 / MPOB).